Consider the following 366-residue polypeptide: Putative agmatine deiminase (366 aa).

Cysteine 357 functions as the Amidino-cysteine intermediate in the catalytic mechanism.

The protein belongs to the agmatine deiminase family.

It catalyses the reaction agmatine + H2O = N-carbamoylputrescine + NH4(+). This Lactococcus lactis subsp. lactis (strain IL1403) (Streptococcus lactis) protein is Putative agmatine deiminase.